Reading from the N-terminus, the 60-residue chain is Chromatin protein Cren7 (60 aa).

Belongs to the Cren7 family. As to quaternary structure, monomer. In terms of processing, methylated at multiple sites, to varying extents.

Its subcellular location is the chromosome. The protein resides in the cytoplasm. Its function is as follows. A chromatin protein, binds double-stranded DNA without sequence specificity. Constrains negative DNA supercoils. This Saccharolobus islandicus (strain M.16.4 / Kamchatka #3) (Sulfolobus islandicus) protein is Chromatin protein Cren7.